A 364-amino-acid polypeptide reads, in one-letter code: Methylthioribose-1-phosphate isomerase (364 aa).

Substrate is bound by residues Arg-53–Ala-55, Arg-90, and Gln-203. Catalysis depends on Asp-244, which acts as the Proton donor. Residue Asn-254–Lys-255 participates in substrate binding.

The protein belongs to the eIF-2B alpha/beta/delta subunits family. MtnA subfamily.

The enzyme catalyses 5-(methylsulfanyl)-alpha-D-ribose 1-phosphate = 5-(methylsulfanyl)-D-ribulose 1-phosphate. It participates in amino-acid biosynthesis; L-methionine biosynthesis via salvage pathway; L-methionine from S-methyl-5-thio-alpha-D-ribose 1-phosphate: step 1/6. In terms of biological role, catalyzes the interconversion of methylthioribose-1-phosphate (MTR-1-P) into methylthioribulose-1-phosphate (MTRu-1-P). The protein is Methylthioribose-1-phosphate isomerase of Rhizobium meliloti (strain 1021) (Ensifer meliloti).